Reading from the N-terminus, the 520-residue chain is MNDASSDPGIPGRPGDVVAAAAPREVGALVFRPLEIDTWQEHVIYMHPDCPVCRAEGFSAQARVRVQIGDRSLIATLTLLGAPLLNTGEASLSLSAARTLSARAGDVVHVTHAPALESVRALRAKIYGCHLDSVQLDGIIGDISAGRYADVHIAAFLTACADGRMSLRETVDLTRAMVRSGQRLNWDREVVADKHCVGGLPGNRTTPVVVAIAAAAGLLLPKTSSRAITSPAGTADTMEALTRVTLDSTELRRVVEQVGAALVWGGALSLSPADDVLIRVERALDIDSDAQLVASILSKKIAAGSTHVLIDVPVGPTAKIREDSDLARLDLAMTKVADAFGLKLRILRTDGSQPVGRGVGPALEALDVLAVLQCQPTAPADLRERSLLLAGELLEFCGAIPPGQGRLLAGSLLDSGAAWARFQAICEAQGGLRTPGQAVFRRDVVAARSGIVTSVDNRHVARTAKLAGAPRRQVAGLELHVRAGDEVVAGAPLCTLHAQASGELEYAFSYALAHDPFRIE.

Belongs to the thymidine/pyrimidine-nucleoside phosphorylase family. Type 2 subfamily.

The catalysed reaction is thymidine + phosphate = 2-deoxy-alpha-D-ribose 1-phosphate + thymine. The sequence is that of Putative thymidine phosphorylase 1 from Cupriavidus necator (strain ATCC 17699 / DSM 428 / KCTC 22496 / NCIMB 10442 / H16 / Stanier 337) (Ralstonia eutropha).